Reading from the N-terminus, the 434-residue chain is Probable G-protein coupled receptor 150 (434 aa).

The Extracellular portion of the chain corresponds to Met-1–Asp-3. Residues Leu-4–Trp-24 form a helical membrane-spanning segment. The Cytoplasmic portion of the chain corresponds to Gly-25–Arg-43. A helical membrane pass occupies residues Val-44–Leu-64. Residues Cys-65–Lys-81 are Extracellular-facing. A helical transmembrane segment spans residues Met-82–Leu-102. The Cytoplasmic portion of the chain corresponds to Ser-103–Arg-162. Residues Ala-163 to Val-183 traverse the membrane as a helical segment. Residues Arg-184–Ala-237 lie on the Extracellular side of the membrane. The segment at Pro-188–Ala-210 is disordered. Residues Ser-189–Pro-205 are compositionally biased toward pro residues. A helical membrane pass occupies residues Val-238–Val-258. Topologically, residues Trp-259–Ser-293 are cytoplasmic. The chain crosses the membrane as a helical span at residues Leu-294–Ala-314. Topologically, residues Arg-315 to Ser-334 are extracellular. A helical transmembrane segment spans residues Ala-335–Phe-355. Residues Gln-356 to Phe-434 lie on the Cytoplasmic side of the membrane. A compositionally biased stretch (basic residues) spans Trp-398–Arg-407. Residues Trp-398–Phe-434 form a disordered region. Pro residues predominate over residues Arg-417–Leu-426.

It belongs to the G-protein coupled receptor 1 family.

The protein resides in the cell membrane. In terms of biological role, orphan receptor. The polypeptide is Probable G-protein coupled receptor 150 (GPR150) (Homo sapiens (Human)).